The following is a 454-amino-acid chain: Bifunctional protein GlmU (454 aa).

The pyrophosphorylase stretch occupies residues 1 to 228 (MNKCAIILAA…FEETLGVNSR (228 aa)). Residues 8–11 (LAAG), Lys-22, Gln-73, and 78–79 (GT) each bind UDP-N-acetyl-alpha-D-glucosamine. A Mg(2+)-binding site is contributed by Asp-103. UDP-N-acetyl-alpha-D-glucosamine contacts are provided by Gly-140, Glu-154, Asn-169, and Asn-226. Asn-226 lines the Mg(2+) pocket. A linker region spans residues 229 to 249 (AELAKVESIMRNRINRTHLDN). Residues 250–454 (GVTIIDPLNT…EGWVERKKLK (205 aa)) form an N-acetyltransferase region. Arg-331 and Lys-349 together coordinate UDP-N-acetyl-alpha-D-glucosamine. His-361 acts as the Proton acceptor in catalysis. UDP-N-acetyl-alpha-D-glucosamine is bound by residues Tyr-364 and Asn-375. Acetyl-CoA-binding positions include 384–385 (NY), Ala-421, and Arg-438.

In the N-terminal section; belongs to the N-acetylglucosamine-1-phosphate uridyltransferase family. The protein in the C-terminal section; belongs to the transferase hexapeptide repeat family. In terms of assembly, homotrimer. It depends on Mg(2+) as a cofactor.

It is found in the cytoplasm. The enzyme catalyses alpha-D-glucosamine 1-phosphate + acetyl-CoA = N-acetyl-alpha-D-glucosamine 1-phosphate + CoA + H(+). It carries out the reaction N-acetyl-alpha-D-glucosamine 1-phosphate + UTP + H(+) = UDP-N-acetyl-alpha-D-glucosamine + diphosphate. The protein operates within nucleotide-sugar biosynthesis; UDP-N-acetyl-alpha-D-glucosamine biosynthesis; N-acetyl-alpha-D-glucosamine 1-phosphate from alpha-D-glucosamine 6-phosphate (route II): step 2/2. It functions in the pathway nucleotide-sugar biosynthesis; UDP-N-acetyl-alpha-D-glucosamine biosynthesis; UDP-N-acetyl-alpha-D-glucosamine from N-acetyl-alpha-D-glucosamine 1-phosphate: step 1/1. Its pathway is bacterial outer membrane biogenesis; LPS lipid A biosynthesis. Its function is as follows. Catalyzes the last two sequential reactions in the de novo biosynthetic pathway for UDP-N-acetylglucosamine (UDP-GlcNAc). The C-terminal domain catalyzes the transfer of acetyl group from acetyl coenzyme A to glucosamine-1-phosphate (GlcN-1-P) to produce N-acetylglucosamine-1-phosphate (GlcNAc-1-P), which is converted into UDP-GlcNAc by the transfer of uridine 5-monophosphate (from uridine 5-triphosphate), a reaction catalyzed by the N-terminal domain. This is Bifunctional protein GlmU from Clostridium perfringens (strain SM101 / Type A).